We begin with the raw amino-acid sequence, 476 residues long: Transcription factor EB (476 aa).

2 disordered regions span residues 1-66 and 107-142; these read MASR…PPVP and HISP…APNS. Positions 1 to 167 are interaction with ACSS2; the sequence is MASRIGLRMQ…DDVIDNIMRL (167 aa). Residues 26 to 44 show a composition bias toward low complexity; the sequence is QQQAVMHYMQQQQQQQQQQ. 4 positions are modified to phosphoserine: Ser109, Ser114, Ser122, and Ser138. Residues 132–142 are compositionally biased toward low complexity; that stretch reads SSSAGNSAPNS. Positions 136-153 match the Nuclear export signal motif; sequence GNSAPNSPMAMLHIGSNP. Residue Ser142 is modified to Phosphoserine; by MTOR. Positions 156–165 are strong transcription activation domain; that stretch reads ELDDVIDNIM. Thr183 carries the phosphothreonine modification. At Ser211 the chain carries Phosphoserine; by MTOR. Position 212 is an S-(2,3-dicarboxypropyl)cysteine (Cys212). One can recognise a bHLH domain in the interval 235–288; that stretch reads QKKDNHNLIERRRRFNINDRIKELGMLIPKANDLDVRWNKGTILKASVDYIRRM. Residues 245–248 carry the Nuclear localization signal motif; it reads RRRR. The leucine-zipper stretch occupies residues 298-319; sequence LENHSRRLEMTNKQLWLRIQEL. Ser332 is modified (phosphoserine). The segment at 349 to 430 is disordered; it reads ELPSEEGPGE…HGSPFPSLSK (82 aa). Over residues 369 to 390 the composition is skewed to pro residues; sequence PEPLPALPPQAPLPLPTQPPSP. A phosphoserine mark is found at Ser423, Ser441, Ser466, Ser467, and Ser469. The segment covering 447–469 has biased composition (low complexity); sequence SDPLLSTMSPEASKASSRRSSFS. The disordered stretch occupies residues 447-476; it reads SDPLLSTMSPEASKASSRRSSFSMEEGDVL.

Belongs to the MiT/TFE family. Homodimer and heterodimer; with TFE3 or MITF. Interacts (when phosphorylated by MTOR) with YWHAZ; promoting retention in the cytosol. Interacts with IRGM; promoting association between TFEB and PPP3CB and dephosphorylation. Interacts with small GTPases Rag (RagA/RRAGA, RagB/RRAGB, RagC/RRAGC and/or RagD/RRAGD); promoting its recruitment to lysosomal membrane in the presence of nutrients. Interacts with ACSS2. In terms of processing, phosphorylation at Ser-211 by MTOR via non-canonical mTORC1 pathway regulates its subcellular location and activity. When nutrients are present, phosphorylation by MTOR promotes association with 14-3-3/YWHA adapters and retention in the cytosol. Inhibition of mTORC1, starvation and lysosomal disruption, promotes dephosphorylation by calcineurin PPP3CB and translocation to the nucleus. Dephosphorylated by calcineurin PPP3CB in response to lysosomal Ca(2+) release. IRGM promotes dephosphorylation by calcineurin PPP3CB, resulting in TFEB nuclear translocation and stimulation of lysosomal biogenesis. Dephosphorylated by phosphatase PPP3CA following Coxsackievirus B3 infection, leading to nuclear translocation. Exported from the nucleus in a mTORC1-dependent manner in response to nutrient availability. Post-translationally, alkylated via a non-enzymatic covalent modification. Itaconate, an anti-inflammatory metabolite generated in response to lipopolysaccharide, alkylates Cys-212, preventing association with 14-3-3/YWHA adapters, thereby promoting nuclear translocation and activity. Sumoylated; does not affect dimerization with MITF. In terms of processing, (Microbial infection) Cleavage by Coxsackievirus B3 protease 3C after site Gln-60. This non-phosphorylated cleavage product retains its ability to interact with TFEB, TFE3 or MITF and presents impaired transcriptional activity, resulting in disruption of lysosomal functions and increased viral infection.

The protein resides in the nucleus. It localises to the cytoplasm. It is found in the cytosol. The protein localises to the lysosome membrane. Inhibited by eltrombopag drug, which binds to the bHLH domain and disrupts DNA-binding. Its function is as follows. Transcription factor that acts as a master regulator of lysosomal biogenesis, autophagy, lysosomal exocytosis, lipid catabolism, energy metabolism and immune response. Specifically recognizes and binds E-box sequences (5'-CANNTG-3'); efficient DNA-binding requires dimerization with itself or with another MiT/TFE family member such as TFE3 or MITF. Involved in the cellular response to amino acid availability by acting downstream of MTOR: in the presence of nutrients, TFEB phosphorylation by MTOR promotes its cytosolic retention and subsequent inactivation. Upon starvation or lysosomal stress, inhibition of MTOR induces TFEB dephosphorylation, resulting in nuclear localization and transcription factor activity. Specifically recognizes and binds the CLEAR-box sequence (5'-GTCACGTGAC-3') present in the regulatory region of many lysosomal genes, leading to activate their expression, thereby playing a central role in expression of lysosomal genes. Regulates lysosomal positioning in response to nutrient deprivation by promoting the expression of PIP4P1. Acts as a positive regulator of autophagy by promoting expression of genes involved in autophagy. In association with TFE3, activates the expression of CD40L in T-cells, thereby playing a role in T-cell-dependent antibody responses in activated CD4(+) T-cells and thymus-dependent humoral immunity. Specifically recognizes the gamma-E3 box, a subset of E-boxes, present in the heavy-chain immunoglobulin enhancer. Plays a role in the signal transduction processes required for normal vascularization of the placenta. Involved in the immune response to infection by the bacteria S.aureus, S.typhimurium or S.enterica: infection promotes itaconate production, leading to alkylation, resulting in nuclear localization and transcription factor activity. Itaconate-mediated alkylation activates TFEB-dependent lysosomal biogenesis, facilitating the bacteria clearance during the antibacterial innate immune response. In association with ACSS2, promotes the expression of genes involved in lysosome biogenesis and both autophagy upon glucose deprivation. This is Transcription factor EB from Homo sapiens (Human).